Here is a 221-residue protein sequence, read N- to C-terminus: MELTLHEARVIGCLLEKEITTPEQYPLSLNALTLACNQKTSREPVLDLSEAQVQDALDSLTKKRLISEQSGFGSRVVKYKHRFCNTEFSELQLSPAAVAIVCLLLLRGPQTPGELRTRSNRLHEFKDVIEVEDCIKQLISRTKPILKQLPREPGRRESRYVELFSETSANVVTTSDHTDKPHIPPVAALVEHGALVARVTELEQHVATLTQKFDELIASLT.

It belongs to the UPF0502 family.

The protein is UPF0502 protein Sputcn32_1644 of Shewanella putrefaciens (strain CN-32 / ATCC BAA-453).